Consider the following 446-residue polypeptide: NADH oxidase (446 aa).

Residues 7–11, aspartate 32, cysteine 42, valine 79, 109–112, lysine 131, and tyrosine 158 each bind FAD; these read GTNHA and ATGS. Histidine 10 functions as the Proton acceptor in the catalytic mechanism. Cysteine 42 (redox-active) is an active-site residue. The residue at position 42 (cysteine 42) is a Cysteine sulfinic acid (-SO2H). NAD(+) is bound by residues isoleucine 159, aspartate 178, tyrosine 187, and glycine 244. Position 282 (aspartate 282) interacts with FAD. Alanine 298 contacts NAD(+). FAD is bound by residues leucine 299, alanine 300, and serine 301. NAD(+) is bound at residue glycine 329. Phenylalanine 427 contributes to the FAD binding site.

The protein belongs to the class-III pyridine nucleotide-disulfide oxidoreductase family. In terms of assembly, homodimer. FAD serves as cofactor.

It carries out the reaction 2 NADH + O2 + 2 H(+) = 2 NAD(+) + 2 H2O. With respect to regulation, inhibited by hydrogen peroxide, sulfhydryl reagents and quinine, but not by EDTA. Functionally, catalyzes the four-electron reduction of molecular oxygen to water. Active on beta-NADH, but not on alpha-NADH, beta-NADPH or alpha-NADPH. Under aerobic conditions, oxygen acts as the electron acceptor. Under anaerobic conditions, DCIP and MB can replace oxygen as the electron acceptor. The polypeptide is NADH oxidase (Lactococcus lactis subsp. cremoris (strain MG1363)).